A 37-amino-acid polypeptide reads, in one-letter code: Large ribosomal subunit protein bL36 (37 aa).

The protein belongs to the bacterial ribosomal protein bL36 family.

The sequence is that of Large ribosomal subunit protein bL36 from Chromobacterium violaceum (strain ATCC 12472 / DSM 30191 / JCM 1249 / CCUG 213 / NBRC 12614 / NCIMB 9131 / NCTC 9757 / MK).